The following is a 1129-amino-acid chain: ISWI chromatin-remodeling complex ATPase ISW1 (1129 aa).

Residues 144–177 (KANGKGKGKHQDVRRRKTEHEEDAELLKEEDSDD) are disordered. Over residues 147-160 (GKGKGKHQDVRRRK) the composition is skewed to basic residues. Residues 164-177 (EEDAELLKEEDSDD) are compositionally biased toward acidic residues. The 166-residue stretch at 208–373 (VSLHKNKIAG…WALLNFLLPD (166 aa)) folds into the Helicase ATP-binding domain. 221–228 (DEMGLGKT) is a binding site for ATP. The short motif at 324–327 (DEAH) is the DEAH box element. The region spanning 506–657 (VLDKLLKKLK…QLVIQQNRTS (152 aa)) is the Helicase C-terminal domain. Positions 683-705 (FKSGTSTGSAGTPEPGSGEKGDD) are disordered. Thr694 is modified (phosphothreonine). Phosphoserine is present on Ser846. 2 SANT domains span residues 882 to 935 (EGFT…SNIE) and 988 to 1052 (NKRT…LLQC). The span at 1073–1108 (KEDENGKRIREEFADQTANEKENVDGVESKKAKIED) shows a compositional bias: basic and acidic residues. The disordered stretch occupies residues 1073-1129 (KEDENGKRIREEFADQTANEKENVDGVESKKAKIEDTSNVGTEQLVAEKIPENETTH).

The protein belongs to the SNF2/RAD54 helicase family. ISWI subfamily. Component of the ISW1A complex, which at least consists of ISW1 and IOC3. Component of the ISW1B complex, which at least consists of ISW1, IOC2 and IOC4.

The protein localises to the nucleus. In terms of biological role, catalytic component of ISW1-type complexes, which act by remodeling the chromatin by catalyzing an ATP-dependent alteration in the structure of nucleosomal DNA. They are involved in coordinating transcriptional repression, activation and elongation phases. The ISW1A complex represses gene expression at initiation through specific positioning of a promoter proximal dinucleosome. The ISW1B complex acts within coding regions to control the amount of RNA polymerase II released into productive elongation and to coordinate elongation with termination and pre-mRNA processing. The sequence is that of ISWI chromatin-remodeling complex ATPase ISW1 (ISW1) from Saccharomyces cerevisiae (strain ATCC 204508 / S288c) (Baker's yeast).